The chain runs to 264 residues: Glutamate racemase (264 aa).

Substrate contacts are provided by residues aspartate 10–serine 11 and tyrosine 42–glycine 43. The Proton donor/acceptor role is filled by cysteine 73. Asparagine 74 to threonine 75 contacts substrate. Cysteine 181 functions as the Proton donor/acceptor in the catalytic mechanism. Residue threonine 182–histidine 183 coordinates substrate.

This sequence belongs to the aspartate/glutamate racemases family.

It catalyses the reaction L-glutamate = D-glutamate. It participates in cell wall biogenesis; peptidoglycan biosynthesis. Functionally, provides the (R)-glutamate required for cell wall biosynthesis. The protein is Glutamate racemase of Thermoanaerobacter sp. (strain X514).